Here is a 613-residue protein sequence, read N- to C-terminus: MDPNLKGITGQSFLDDQAECSESDNSEQGCEESLSDLSDLIDNAECEQGNSAELFAQQEAFAFQEHIRTTKRKLKLSFRNPLQCITSQSNRSPGRAAPKRRVLDDSGYNEDILAEVAQVDENGGSEGYGSLASQSLSGQSQKNGKNRVNNGNKENIDCTRLLAASSHRAVQLAIFKEKFGISLNSLTRIFKNDKTCCSNWVGVVFGAREELLAASQTILQRVCDSIMLLTHTCKLGFMGLYLLEFKNAKSRDTVRHLFQQILQVENNDMLLEPPKIKSLPAATFWWKLRHSSAAFLFGNLPDWIARQTSITHQIQEDQPFDLSAMVQWAYDHNFVDEAQIAYYYARLASEDSNAAAFLRCNNQVKHVKECAQMTRYYKTAEMREMSMSKWIKKCLNEIEGTGDWKQIINFIKYQNINFLSFLACFRDLLHSVPKRNCLVIVGPPNTGKSMFVMSLMRTLKGRVLSFVNSKSHFWLQPLNAAKIAILDDATRPTWSYIDTYLRNGLDGTPVSLDMKHRAPMQICFPPLIITTNVDVAKDPTFVYLHSRLMSFEFANAFPLDENGKPALILNELSWKSFFERLWNQLDLTEPEDEDDGDPPSPFRCSARAAARDL.

The tract at residues 1 to 31 (MDPNLKGITGQSFLDDQAECSESDNSEQGCE) is disordered. Positions 16–31 (DQAECSESDNSEQGCE) are enriched in acidic residues. Positions 71-73 (KRK) match the Nuclear localization signal motif. Phosphoserine; by host is present on residues Ser77 and Ser92. The segment at 128–152 (YGSLASQSLSGQSQKNGKNRVNNGN) is disordered. Positions 129–152 (GSLASQSLSGQSQKNGKNRVNNGN) are enriched in low complexity. A DNA-binding region region spans residues 150-317 (NGNKENIDCT…TSITHQIQED (168 aa)). Positions 413–566 (YQNINFLSFL…FPLDENGKPA (154 aa)) constitute an SF3 helicase domain. 442–449 (GPPNTGKS) serves as a coordination point for ATP. The span at 588 to 597 (TEPEDEDDGD) shows a compositional bias: acidic residues. The disordered stretch occupies residues 588–613 (TEPEDEDDGDPPSPFRCSARAAARDL).

This sequence belongs to the papillomaviridae E1 protein family. As to quaternary structure, can form hexamers. Interacts with E2 protein; this interaction increases E1 DNA binding specificity. Interacts with host DNA polymerase subunit POLA2. Interacts with host single stranded DNA-binding protein RPA1. Interacts with host TOP1; this interaction stimulates the enzymatic activity of TOP1. Phosphorylated.

The protein localises to the host nucleus. It carries out the reaction Couples ATP hydrolysis with the unwinding of duplex DNA by translocating in the 3'-5' direction.. The enzyme catalyses ATP + H2O = ADP + phosphate + H(+). ATP-dependent DNA 3'-5' helicase required for initiation of viral DNA replication. It forms a complex with the viral E2 protein. The E1-E2 complex binds to the replication origin which contains binding sites for both proteins. During the initial step, a dimer of E1 interacts with a dimer of protein E2 leading to a complex that binds the viral origin of replication with high specificity. Then, a second dimer of E1 displaces the E2 dimer in an ATP-dependent manner to form the E1 tetramer. Following this, two E1 monomers are added to each half of the site, which results in the formation of two E1 trimers on the viral ori. Subsequently, two hexamers will be created. The double hexamer acts as a bi-directional helicase machinery and unwinds the viral DNA and then recruits the host DNA polymerase to start replication. The chain is Replication protein E1 from Bos taurus (Bovine).